Here is a 501-residue protein sequence, read N- to C-terminus: Lysine--tRNA ligase (501 aa).

Mg(2+) is bound by residues Glu402 and Glu409.

The protein belongs to the class-II aminoacyl-tRNA synthetase family. As to quaternary structure, homodimer. Mg(2+) is required as a cofactor.

It is found in the cytoplasm. It catalyses the reaction tRNA(Lys) + L-lysine + ATP = L-lysyl-tRNA(Lys) + AMP + diphosphate. This chain is Lysine--tRNA ligase (lysS), found in Helicobacter pylori (strain J99 / ATCC 700824) (Campylobacter pylori J99).